A 662-amino-acid polypeptide reads, in one-letter code: Translation factor guf1, mitochondrial (662 aa).

A mitochondrion-targeting transit peptide spans 1-42 (MRGCLQLARWLSAAPNWPASSLLKAPGSSFATRLFTTTSSYK). Residues 64 to 244 (ERYRNFCIVA…TVVEKIPAPI (181 aa)) enclose the tr-type G domain. GTP-binding positions include 73 to 80 (AHVDHGKS), 137 to 141 (DTPGH), and 191 to 194 (NKVD).

Belongs to the TRAFAC class translation factor GTPase superfamily. Classic translation factor GTPase family. LepA subfamily.

Its subcellular location is the mitochondrion inner membrane. It carries out the reaction GTP + H2O = GDP + phosphate + H(+). Promotes mitochondrial protein synthesis. May act as a fidelity factor of the translation reaction, by catalyzing a one-codon backward translocation of tRNAs on improperly translocated ribosomes. Binds to mitochondrial ribosomes in a GTP-dependent manner. The sequence is that of Translation factor guf1, mitochondrial (guf1) from Emericella nidulans (strain FGSC A4 / ATCC 38163 / CBS 112.46 / NRRL 194 / M139) (Aspergillus nidulans).